The sequence spans 240 residues: Eukaryotic translation initiation factor 4E-2 (240 aa).

The disordered stretch occupies residues 1–29; sequence MVVMDSPVSGRMADQNIDPNTTTSPSPIE. The segment covering 17 to 26 has biased composition (polar residues); it reads IDPNTTTSPS. EIF4G-binding regions lie at residues 65–68 and 75–111; these read HCFQ and FDNP…NNIH. MRNA contacts are provided by residues 83-88, lysine 115, and 133-134; these read NQVIWG and WE. Cysteine 138 and cysteine 176 form a disulfide bridge. The interval 159–168 is EIF4G-binding; that stretch reads NTLLALVGEQ. MRNA-binding positions include 183–188 and 228–232; these read RTRGDR and KTLDR.

It belongs to the eukaryotic initiation factor 4E family. EIF4F is a multi-subunit complex, the composition of which varies with external and internal environmental conditions. It is composed of at least EIF4A, EIF4E and EIF4G. EIF4E is also known to interact with other partners. In higher plants two isoforms of EIF4F have been identified, named isoform EIF4F and isoform EIF(iso)4F. Isoform EIF4F has subunits p220 and p26, whereas isoform EIF(iso)4F has subunits p82 and p28. Post-translationally, according to the redox status, the Cys-138-Cys-176 disulfide bridge may have a role in regulating protein function by affecting its ability to bind capped mRNA.

It is found in the nucleus. Its subcellular location is the cytoplasm. In terms of biological role, component of the protein complex eIF4F, which is involved in the recognition of the mRNA cap, ATP-dependent unwinding of 5'-terminal secondary structure and recruitment of mRNA to the ribosome. Recognizes and binds the 7-methylguanosine-containing mRNA cap during an early step in the initiation of protein synthesis and facilitates ribosome binding by inducing the unwinding of the mRNAs secondary structures. The protein is Eukaryotic translation initiation factor 4E-2 of Arabidopsis thaliana (Mouse-ear cress).